We begin with the raw amino-acid sequence, 127 residues long: Fluoride-specific ion channel FluC (127 aa).

The next 4 membrane-spanning stretches (helical) occupy residues 4-24 (LLLA…LLSM), 35-55 (LGTL…FAWF), 71-91 (TGFC…VFLL), and 103-123 (VFVN…LFSA). Na(+) is bound by residues glycine 75 and threonine 78.

This sequence belongs to the fluoride channel Fluc/FEX (TC 1.A.43) family.

The protein resides in the cell inner membrane. It carries out the reaction fluoride(in) = fluoride(out). With respect to regulation, na(+) is not transported, but it plays an essential structural role and its presence is essential for fluoride channel function. In terms of biological role, fluoride-specific ion channel. Important for reducing fluoride concentration in the cell, thus reducing its toxicity. The chain is Fluoride-specific ion channel FluC from Escherichia coli (strain K12 / MC4100 / BW2952).